The primary structure comprises 604 residues: Putative O-acetyltransferase SACOL0978 (604 aa).

11 helical membrane passes run 15-35, 43-63, 85-105, 150-170, 176-196, 212-232, 240-260, 267-287, 310-330, 332-352, and 377-397; these read YIPGLDGLRAIAVLGIIIYHL, GFLGVDTFFVISGYLITSLLL, LLPAVIVLLMVVGTATLLLKS, AIEEQFYIFFPVILVTLLLTI, IGFIFWGVSIISLGLMMFIYS, LQTLLLGVILAFLWPPFKLKN, YVIDSIGSLSFIVLILLFFII, IYDGGFYLISILTLFIIASVV, YSLYLWHFAVISFVHSYYVDG, IPVYVYFIDISLTIIFAELSY, and FIRMAIVVTLLIPFMLILVGA. Residues serine 459, aspartate 581, and histidine 584 contribute to the active site.

It belongs to the acyltransferase 3 family.

Its subcellular location is the cell membrane. The sequence is that of Putative O-acetyltransferase SACOL0978 from Staphylococcus aureus (strain COL).